Consider the following 291-residue polypeptide: Phytanoyl-CoA dioxygenase domain-containing protein 1 (291 aa).

The residue at position 55 (threonine 55) is a Phosphothreonine. 2-oxoglutarate is bound by residues lysine 102, methionine 141, 156–158 (HQD), and tryptophan 174. Residues histidine 156 and aspartate 158 each contribute to the Fe cation site. Histidine 246 contacts Fe cation. 2 residues coordinate 2-oxoglutarate: serine 248 and arginine 257.

This sequence belongs to the PhyH family. PHYHD1 subfamily. The cofactor is Fe cation.

Functionally, 2-oxoglutarate(2OG)-dependent dioxygenase that catalyzes the conversion of 2-oxoglutarate to succinate and CO(2) in an iron-dependent manner. However, does not couple 2OG turnover to the hydroxylation of acyl-coenzyme A derivatives, implying that it is not directly involved in phytanoyl coenzyme-A metabolism. Does not show detectable activity towards fatty acid CoA thioesters. The protein is Phytanoyl-CoA dioxygenase domain-containing protein 1 (PHYHD1) of Bos taurus (Bovine).